The following is a 563-amino-acid chain: Arginine--tRNA ligase (563 aa).

This sequence belongs to the class-I aminoacyl-tRNA synthetase family. As to quaternary structure, monomer.

The enzyme catalyses tRNA(Arg) + L-arginine + ATP = L-arginyl-tRNA(Arg) + AMP + diphosphate. The chain is Arginine--tRNA ligase from Encephalitozoon cuniculi (strain GB-M1) (Microsporidian parasite).